A 256-amino-acid chain; its full sequence is Trans-aconitate 2-methyltransferase (256 aa).

This sequence belongs to the methyltransferase superfamily. Tam family.

Its subcellular location is the cytoplasm. It carries out the reaction trans-aconitate + S-adenosyl-L-methionine = (E)-3-(methoxycarbonyl)pent-2-enedioate + S-adenosyl-L-homocysteine. In terms of biological role, catalyzes the S-adenosylmethionine monomethyl esterification of trans-aconitate. This chain is Trans-aconitate 2-methyltransferase, found in Rhizobium leguminosarum bv. trifolii (strain WSM2304).